A 183-amino-acid polypeptide reads, in one-letter code: Glutamyl-tRNA(Gln) amidotransferase subunit F, mitochondrial (183 aa).

This sequence belongs to the GatF family. As to quaternary structure, subunit of the heterotrimeric GatFAB amidotransferase (AdT) complex, composed of A (HER2), B (PET112) and F (YGR102C) subunits.

The protein resides in the mitochondrion inner membrane. It catalyses the reaction L-glutamyl-tRNA(Gln) + L-glutamine + ATP + H2O = L-glutaminyl-tRNA(Gln) + L-glutamate + ADP + phosphate + H(+). Functionally, allows the formation of correctly charged Gln-tRNA(Gln) through the transamidation of misacylated Glu-tRNA(Gln) in the mitochondria. The reaction takes place in the presence of glutamine and ATP through an activated gamma-phospho-Glu-tRNA(Gln). Required for proper protein synthesis within the mitochondrion. This Saccharomyces cerevisiae (strain ATCC 204508 / S288c) (Baker's yeast) protein is Glutamyl-tRNA(Gln) amidotransferase subunit F, mitochondrial.